The primary structure comprises 310 residues: tRNA methyltransferase 10 homolog B (310 aa).

Residues 55 to 94 (RKQRNWERRLEVKKSKRKEEKLRKKLNRQDKDVSDAQLSK) adopt a coiled-coil conformation. One can recognise an SAM-dependent MTase TRM10-type domain in the interval 101–298 (TKERLEGARA…AGIPPGKGFV (198 aa)).

Belongs to the class IV-like SAM-binding methyltransferase superfamily. TRM10 family.

It catalyses the reaction guanosine(9) in tRNA + S-adenosyl-L-methionine = N(1)-methylguanosine(9) in tRNA + S-adenosyl-L-homocysteine + H(+). Its function is as follows. S-adenosyl-L-methionine-dependent guanine N(1)-methyltransferase that catalyzes the formation of N(1)-methylguanine at position 9 (m1G9) in tRNAs. Probably not able to catalyze formation of N(1)-methyladenine at position 9 (m1A9) in tRNAs. This chain is tRNA methyltransferase 10 homolog B (trmt10b), found in Danio rerio (Zebrafish).